Consider the following 67-residue polypeptide: Preprofallaxidin-1 (67 aa).

An N-terminal signal peptide occupies residues 1–22; sequence MASLKKSLFLVLFLGMVSLSIC. A propeptide spanning residues 23-46 is cleaved from the precursor; it reads DKEKREGENEEEEEEHEEESEEKR. Residues 24-46 form a disordered region; it reads KEKREGENEEEEEEHEEESEEKR. The segment covering 30-42 has biased composition (acidic residues); that stretch reads ENEEEEEEHEEES.

As to expression, expressed by the skin glands.

The protein resides in the secreted. Its function is as follows. Fallaxidin-4.1 shows antibacterial activity against the Gram-positive bacteria L.lactis (MIC=12 uM), M.luteus (MIC=100 uM), S.epidermidis (MIC=100 uM) and S.uberis (MIC=50 uM). No antibacterial activity against the Gram-positive bacteria B.cereus, E.faecalis, L.innocua, S.aureus, or the Gram-negative bacteria E.cloacae and E.coli. Inhibits the formation of NO by neuronal nitric oxide synthase with an IC(50) of 13.3 uM. This Litoria fallax (Eastern dwarf tree frog) protein is Preprofallaxidin-1.